Consider the following 238-residue polypeptide: Transmembrane protein 127 (238 aa).

The residue at position 1 (methionine 1) is an N-acetylmethionine. The segment covering 1-11 has biased composition (gly residues); sequence MYAPGGAGLPG. The segment at 1-27 is disordered; it reads MYAPGGAGLPGGRRRRSPGGSALPKQP. Serine 17 bears the Phosphoserine mark. The next 3 helical transmembrane spans lie at 96–116, 130–150, and 169–189; these read IAAFCFLGILCSLSAFLLDVF, AFAHILTVLQCATVIGFSYWA, and VYVTFAVSFYLVAGAGGASIL.

Belongs to the TMEM127 family. As to expression, widely expressed.

The protein resides in the cell membrane. Its subcellular location is the cytoplasm. In terms of biological role, controls cell proliferation acting as a negative regulator of TOR signaling pathway mediated by mTORC1. May act as a tumor suppressor. In Homo sapiens (Human), this protein is Transmembrane protein 127 (TMEM127).